A 207-amino-acid polypeptide reads, in one-letter code: Phosphoserine phosphatase (207 aa).

The active-site Nucleophile is aspartate 8. Residues aspartate 8 and aspartate 10 each contribute to the Mg(2+) site. Residue aspartate 10 is the Proton donor of the active site. Residues glutamate 17, arginine 53, 96–97 (SG), and lysine 141 contribute to the substrate site. Residue aspartate 164 participates in Mg(2+) binding. Asparagine 167 contacts substrate.

It belongs to the HAD-like hydrolase superfamily. SerB family. Requires Mg(2+) as cofactor.

It catalyses the reaction O-phospho-L-serine + H2O = L-serine + phosphate. It carries out the reaction O-phospho-D-serine + H2O = D-serine + phosphate. It functions in the pathway amino-acid biosynthesis; L-serine biosynthesis; L-serine from 3-phospho-D-glycerate: step 3/3. The polypeptide is Phosphoserine phosphatase (Campylobacter jejuni subsp. doylei (strain ATCC BAA-1458 / RM4099 / 269.97)).